A 351-amino-acid polypeptide reads, in one-letter code: uncharacterized protein (351 aa).

Asp-215, Asp-226, His-290, Glu-319, and Glu-333 together coordinate Mn(2+).

The protein belongs to the peptidase M24B family. Requires Mn(2+) as cofactor.

This is an uncharacterized protein from Staphylococcus aureus (strain MSSA476).